We begin with the raw amino-acid sequence, 293 residues long: Phycoerythrin class 2 subunit gamma, linker polypeptide (293 aa).

C49 contributes to the phycourobilin binding site. The 180-residue stretch at A50 to D229 folds into the PBS-linker domain.

Contains one covalently linked phycourobilin chromophore.

The protein resides in the cellular thylakoid membrane. This protein is a bile pigment-bearing rod linker polypeptide that associates with C-phycoerythrin. In Synechococcus sp. (strain WH8020), this protein is Phycoerythrin class 2 subunit gamma, linker polypeptide (mpeC).